The primary structure comprises 541 residues: Arginine--tRNA ligase (541 aa).

The 'HIGH' region signature appears at 119–129 (ANPTGPLHIGH).

It belongs to the class-I aminoacyl-tRNA synthetase family. As to quaternary structure, monomer.

Its subcellular location is the cytoplasm. It catalyses the reaction tRNA(Arg) + L-arginine + ATP = L-arginyl-tRNA(Arg) + AMP + diphosphate. This is Arginine--tRNA ligase from Helicobacter pylori (strain P12).